An 807-amino-acid polypeptide reads, in one-letter code: Glycerol-3-phosphate acyltransferase (807 aa).

An HXXXXD motif motif is present at residues Cys-308 to Met-313.

The protein belongs to the GPAT/DAPAT family.

It localises to the cell inner membrane. It catalyses the reaction sn-glycerol 3-phosphate + an acyl-CoA = a 1-acyl-sn-glycero-3-phosphate + CoA. The protein operates within phospholipid metabolism; CDP-diacylglycerol biosynthesis; CDP-diacylglycerol from sn-glycerol 3-phosphate: step 1/3. This is Glycerol-3-phosphate acyltransferase from Shewanella baltica (strain OS223).